The primary structure comprises 968 residues: RNA polymerase-associated protein RapA (968 aa).

The 170-residue stretch at 163 to 332 (EVGRRYAPRV…FARLRLLDPD (170 aa)) folds into the Helicase ATP-binding domain. 176-183 (DEVGLGKT) is an ATP binding site. The DEAH box signature appears at 278 to 281 (DEAH). In terms of domain architecture, Helicase C-terminal spans 491–641 (RVDWLIEFLK…AFELTCPSGH (151 aa)).

Belongs to the SNF2/RAD54 helicase family. RapA subfamily. As to quaternary structure, interacts with the RNAP. Has a higher affinity for the core RNAP than for the holoenzyme. Its ATPase activity is stimulated by binding to RNAP.

In terms of biological role, transcription regulator that activates transcription by stimulating RNA polymerase (RNAP) recycling in case of stress conditions such as supercoiled DNA or high salt concentrations. Probably acts by releasing the RNAP, when it is trapped or immobilized on tightly supercoiled DNA. Does not activate transcription on linear DNA. Probably not involved in DNA repair. The sequence is that of RNA polymerase-associated protein RapA from Shewanella baltica (strain OS185).